The primary structure comprises 380 residues: Protein neprosin (380 aa).

Residues 1-24 form the signal peptide; the sequence is MQAKFFTFVILSSVFYFNYPLAEA. A propeptide spans 25-128 (activation peptide); it reads RSIQARLANK…QFPNLKFAPP (104 aa). C52 and C98 are disulfide-bonded. N-linked (GlcNAc...) asparagine glycans are attached at residues N68, N145, and N152. A Neprosin PEP catalytic domain is found at 129 to 380; it reads SANTNHQYAV…YLFYGGPGCQ (252 aa). E188 is a catalytic residue. Residues C219 and C224 are joined by a disulfide bond. Residue N253 is glycosylated (N-linked (GlcNAc...) asparagine). The active site involves E297. C358 and C379 are disulfide-bonded.

It belongs to the peptidase G3 family.

Its subcellular location is the secreted. It catalyses the reaction Hydrolysis of Pro-|-Xaa &gt;&gt; Ala-|-Xaa in oligopeptides.. With respect to regulation, weakly inhibited by the aspartic protease inhibitor pepstatin. Weakly inhibited by pepstatin A (IC(50) of 140 uM) and 1,2-epoxy-3-(p-nitrophenoxy)propane (EPNP) (IC(50) of 480 uM). Activity is not affected by the POP inhibitor Z-Pro-prolinal inhibitor or the denaturant urea. In terms of biological role, glutamic endopeptidase that preferentially cleaves peptide bonds on the C-terminal side of proline residues. Also cleaves peptide bonds on the C-terminal side of alanine residues but with less efficiency. In contrast to most proline-cleaving enzymes, effectively degrades proteins of any size. Found in the viscoelastic fluid of the pitcher, and so likely functions in the digestion of their prey. This Nepenthes x ventrata (Red tropical pitcher plant) protein is Protein neprosin.